A 228-amino-acid polypeptide reads, in one-letter code: Aquaporin Z (228 aa).

The next 2 helical transmembrane spans lie at 1–21 (MLNK…GGCG) and 23–43 (AILA…ALAF). Positions 63–65 (NPA) match the NPA 1 motif. Transmembrane regions (helical) follow at residues 82–102 (IPYW…LYVI), 129–149 (MMAG…IILG), and 154–174 (LAPA…IHLV). An NPA 2 motif is present at residues 184 to 186 (NPA). A helical membrane pass occupies residues 205 to 225 (LFWVAPLVGAVIGAIIWKGLL).

Belongs to the MIP/aquaporin (TC 1.A.8) family. As to quaternary structure, homotetramer.

It localises to the cell inner membrane. The catalysed reaction is H2O(in) = H2O(out). Channel that permits osmotically driven movement of water in both directions. It is involved in the osmoregulation and in the maintenance of cell turgor during volume expansion in rapidly growing cells. It mediates rapid entry or exit of water in response to abrupt changes in osmolarity. This Brucella melitensis biotype 1 (strain ATCC 23456 / CCUG 17765 / NCTC 10094 / 16M) protein is Aquaporin Z.